The chain runs to 386 residues: G2/mitotic-specific cyclin-B2 (386 aa).

The tract at residues 45 to 64 (TNGKVGPSKKPSKASCAQKP) is disordered.

It belongs to the cyclin family. Cyclin AB subfamily. As to quaternary structure, interacts with the CDK1 protein kinase to form a serine/threonine kinase holoenzyme complex also known as maturation promoting factor (MPF). The cyclin subunit imparts substrate specificity to the complex.

Functionally, essential for the control of the cell cycle at the G2/M (mitosis) transition. This chain is G2/mitotic-specific cyclin-B2 (ccnb2), found in Oryzias luzonensis (Luzon ricefish).